The sequence spans 461 residues: E3 ubiquitin-protein ligase TRIM15 (461 aa).

Residues 12–57 (CSDCQGRLEDAVTAACGHTFCRLCLPLPPQMGAQPSSRVLLCPVCQ) form an RING-type zinc finger. The B box-type zinc-finger motif lies at 74–115 (LGETYCEEHGEKIYFFCENDAEFLCVFCREGPSHQAHAVGFL). Residues C79, H82, C101, and H107 each coordinate Zn(2+). The stretch at 123-230 (RDRLRGRLEA…EKCQQPASEL (108 aa)) forms a coiled coil. A B30.2/SPRY domain is found at 272–461 (EMLRAFSENL…KKGSCLTLKG (190 aa)).

This sequence belongs to the TRIM/RBCC family. Interacts with paxillin/PXN; this interaction recruits TRIM15 to focal adhesions. Interacts with TRIM8; this interaction prevents TRIM8 cytoplasmic translocation.

It localises to the cytoplasm. The protein localises to the nucleus. Its subcellular location is the cell junction. It is found in the focal adhesion. It catalyses the reaction S-ubiquitinyl-[E2 ubiquitin-conjugating enzyme]-L-cysteine + [acceptor protein]-L-lysine = [E2 ubiquitin-conjugating enzyme]-L-cysteine + N(6)-ubiquitinyl-[acceptor protein]-L-lysine.. Its function is as follows. E3 ubiquitin ligase that plays a role in several processes including innate antiviral immnity, cell migration and chemotaxis. Acts as a 'Lys-63'-specific ubiquitin ligase for MAPK1/ERK2 and MAPK3/ERK1, promoting their activation by facilitating their interaction with MAP2K1 and MAP2K2. Also plays a role in cell migration and chemotaxis by acting as a stable focal adhesion component upon recruitment by multi-adapter protein paxillin/PXN. Functions in the RIGI-mediated interferon induction pathway upstream or at the level of MAVS. Inhibits NF-kappa-B activation by turnover of 'Lys-63'-linked ubiquitination of MAP3K7/TAK1. Mechanistically, prevents TRIM8 cytoplasmic translocation and thus inhibits TRIM8-mediated 'Lys-63'-linked polyubiquitination of MAP3K7/TAK1 in the cytoplasm. Also has an important regulatory effect on the activation of hepatic stellate cells (HSCs). This is E3 ubiquitin-protein ligase TRIM15 (TRIM15) from Sus scrofa (Pig).